The chain runs to 382 residues: Chorismate synthase (382 aa).

NADP(+) contacts are provided by Arg-39 and Arg-45. FMN contacts are provided by residues 128–130 (RAS), 246–247 (QA), Ala-290, 305–309 (KPIAT), and Arg-331.

It belongs to the chorismate synthase family. In terms of assembly, homotetramer. FMNH2 serves as cofactor.

The catalysed reaction is 5-O-(1-carboxyvinyl)-3-phosphoshikimate = chorismate + phosphate. It participates in metabolic intermediate biosynthesis; chorismate biosynthesis; chorismate from D-erythrose 4-phosphate and phosphoenolpyruvate: step 7/7. Functionally, catalyzes the anti-1,4-elimination of the C-3 phosphate and the C-6 proR hydrogen from 5-enolpyruvylshikimate-3-phosphate (EPSP) to yield chorismate, which is the branch point compound that serves as the starting substrate for the three terminal pathways of aromatic amino acid biosynthesis. This reaction introduces a second double bond into the aromatic ring system. In Deinococcus geothermalis (strain DSM 11300 / CIP 105573 / AG-3a), this protein is Chorismate synthase.